Reading from the N-terminus, the 172-residue chain is Urease accessory protein UreE (172 aa).

It belongs to the UreE family.

The protein localises to the cytoplasm. Its function is as follows. Involved in urease metallocenter assembly. Binds nickel. Probably functions as a nickel donor during metallocenter assembly. This Shewanella halifaxensis (strain HAW-EB4) protein is Urease accessory protein UreE.